Reading from the N-terminus, the 551-residue chain is Lysine--tRNA ligase (551 aa).

The short motif at 54–62 (PSGLPHIGT) is the 'HIGH' region element. Positions 303–307 (KISKS) match the 'KMSKS' region motif. Lys-306 is an ATP binding site.

This sequence belongs to the class-I aminoacyl-tRNA synthetase family.

Its subcellular location is the cytoplasm. The catalysed reaction is tRNA(Lys) + L-lysine + ATP = L-lysyl-tRNA(Lys) + AMP + diphosphate. The sequence is that of Lysine--tRNA ligase from Brucella melitensis biotype 1 (strain ATCC 23456 / CCUG 17765 / NCTC 10094 / 16M).